Consider the following 600-residue polypeptide: Beta-hexosaminidase (600 aa).

An N-terminal signal peptide occupies residues 1 to 18 (MRISQICTVLSTVTSAVA). A propeptide spanning residues 19–96 (VGVNPLPAPR…PFPTPTAGAS (78 aa)) is cleaved from the precursor. O-linked (Man...) threonine glycosylation occurs at Thr-78. 2 O-linked (Man...) serine glycosylation sites follow: Ser-83 and Ser-84. Active-site charge relay system residues include Asp-222 and His-275. Cys-290 and Cys-351 form a disulfide bridge. Residue Asn-318 is glycosylated (N-linked (HexNAc...) asparagine). Glu-346 acts as the Charge relay system in catalysis. Asn-353 carries an N-linked (GlcNAc...) asparagine glycan. The N-linked (HexNAc...) asparagine glycan is linked to Asn-387. An N-linked (GlcNAc...) asparagine glycan is attached at Asn-428. An intrachain disulfide couples Cys-448 to Cys-483. N-linked (GlcNAc...) asparagine glycans are attached at residues Asn-500 and Asn-525. Cys-583 and Cys-590 are joined by a disulfide.

This sequence belongs to the glycosyl hydrolase 20 family. Homodimer. Oligosaccharide moieties may also take part in the dimerization. Dimerization is a pH-dependent reversible process. The individual catalytic cores dimerize and the catalytic core of one subunit in the active dimer interacts with the propeptide of the second subunit. In terms of processing, the precursor of the propeptide is intracellularly processed in the endoplasmic reticulum by a dibasic peptidase, different from Kex2, removing Lys-97--Arg-101 from the precursor producing the activated propeptide. The propeptide binds non-covalently to the catalytic domain. Propeptide binding is necessary for full activation of the enzyme, dimerization of the catalytic domain and secretion of the active enzyme. O-glycosylated. O-glycosylation (O-mannosylation) at the C-terminus of the propeptide is necessary for full enzyme activity. N-glycosylated. N-glycosylation of the catalytic domain increases the stability and solubility of the enzyme, especially at low pH. Contains high mannose-type (M4-M11) N-glycans at the C-terminus. N-glycan deglycosylation does not affect enzyme activity.

It is found in the secreted. The enzyme catalyses Hydrolysis of terminal non-reducing N-acetyl-D-hexosamine residues in N-acetyl-beta-D-hexosaminides.. Its activity is regulated as follows. Activated by non-covalent binding of the propeptide to the catalytic domain. The concentration of the propeptide is regulated in the endoplasmic reticulum and the propeptide thus regulates the amount of the active enzyme at various stages of the growth cycle. The dimeric enzyme has about half of the maximal activity in the presence of one bound propeptide, but is fully active with two bound O-glycosylated propeptides. Inhibited by N-acetylglucosamine (NAG)-thiazoline. In terms of biological role, selectively hydrolyzes GlcNAcbeta(1-&gt;4)GlcNAc (N,N'-diacetylchitobiose) and Gal-NAcbeta(1-&gt;4)GlcNAc, but not their C-2 epimers GlcNAcbeta(1-&gt;4)ManNAc or Gal-NAcbeta(1-&gt;4)ManNAc. However, hydrolyzes both GlcNAcbeta(1-&gt;6)GlcNAc and GlcNAcbeta(1-&gt;6)ManNAc. Part of the binary chitinolytic system. Involved in hydrolysis of chitobiose and higher chito-oligomers (produced from cell wall chitin by endochitinases), thus contributing to the formation of germ tubes, fruit-bodies and septa during hyphenation. Hydrolyzes synthetic substrate p-nitrophenyl-beta-N-acetyl-D-glucosaminide (pNP-GlcNAc). Hydrolyzes synthetic substrate p-nitrophenyl-beta-N-acetyl-D-galactosaminide (pNP-GalNAc). Hydrolyzes chromogenic substrate 4-nitrophenyl-2-acetamido-2-deoxyglucopyranoside. The chain is Beta-hexosaminidase from Aspergillus oryzae (Yellow koji mold).